The chain runs to 208 residues: MKLLPSVVLKLFLAAVLSALVTGESLERLRRGLAAGTSNPDPPTVSTDQLLPLGGGRDRKVRDLQEADLDLLRVTLSSKPQALATPNKEEHGKRKKKGKGLGKKRDPCLRKYKDFCIHGECKYVKELRAPSCICHPGYHGERCHGLSLPVENRLYTYDHTTILAVVAVVLSSVCLLVIVGLLMFRYHRRGGYDVENEEKVKLGMTNSH.

A signal peptide spans Met-1–Ala-19. Positions Leu-20–Arg-62 are cleaved as a propeptide — or 72, or 73, or 76, or 81. The Extracellular segment spans residues Leu-20–Thr-160. Residues Leu-33–Gly-56 form a disordered region. Residues Gly-36–Gln-49 are compositionally biased toward polar residues. O-linked (GalNAc...) threonine glycosylation is present at Thr-37. A glycan (O-linked (GalNAc...) serine) is linked at Ser-38. 4 O-linked (GalNAc...) threonine glycosylation sites follow: Thr-44, Thr-47, Thr-75, and Thr-85. Residues Ala-82–Lys-104 form a disordered region. A compositionally biased stretch (basic residues) spans Lys-93 to Gly-102. In terms of domain architecture, EGF-like spans Lys-104–His-144. 3 disulfide bridges follow: Cys-108/Cys-121, Cys-116/Cys-132, and Cys-134/Cys-143. The propeptide at Pro-149–His-208 is C-terminal. The chain crosses the membrane as a helical span at residues Thr-161 to Phe-184. The Cytoplasmic portion of the chain corresponds to Arg-185–His-208.

Interacts with FBLN1. Interacts with EGFR and ERBB4. Several N-termini have been identified by direct sequencing. The forms with N-termini 63, 73 and 74 have been tested and found to be biologically active. Post-translationally, O-glycosylated with core 1 or possibly core 8 glycans. Thr-47 is a minor glycosylation site compared to Thr-44.

It localises to the secreted. It is found in the extracellular space. Its subcellular location is the cell membrane. Its function is as follows. Growth factor that mediates its effects via EGFR, ERBB2 and ERBB4. Required for normal cardiac valve formation and normal heart function. Promotes smooth muscle cell proliferation. May be involved in macrophage-mediated cellular proliferation. It is mitogenic for fibroblasts, but not endothelial cells. It is able to bind EGF receptor/EGFR with higher affinity than EGF itself and is a far more potent mitogen for smooth muscle cells than EGF. Also acts as a diphtheria toxin receptor. In Homo sapiens (Human), this protein is Proheparin-binding EGF-like growth factor (HBEGF).